The sequence spans 156 residues: MAALIDTGIFFGFYSLKDVHHMDSVAIVVHAVEGKWGRLFVTNHILDETLTLLKYKKLPADKFLEGFVESGVLNIIYTDDEVERKALEVFKARVYEKGFSYTDAISEVVAEELKLKLISYDSRFSLPTIGRDYWKSLDESERKRISAILREKGIDG.

The PINc domain occupies 4–125 (LIDTGIFFGF…KLISYDSRFS (122 aa)). Mg(2+) is bound by residues Asp-6 and Asp-103.

This sequence belongs to the PINc/VapC protein family. Mg(2+) serves as cofactor.

Functionally, toxic component of a type II toxin-antitoxin (TA) system. An RNase. The protein is VapC ribonuclease AF_1683 of Archaeoglobus fulgidus (strain ATCC 49558 / DSM 4304 / JCM 9628 / NBRC 100126 / VC-16).